The sequence spans 497 residues: PHD finger protein 10 (497 aa).

Residues 1–61 form a disordered region; that stretch reads MAAAGPGAAL…SSRSCETSSQ (61 aa). Phosphoserine occurs at positions 11, 35, and 49. The tract at residues 88 to 184 is essential to induce neural progenitor proliferation; the sequence is MLQEQVSEYL…HYKEYSQMQQ (97 aa). Positions 88–294 are SAY; the sequence is MLQEQVSEYL…PPLDPELPAL (207 aa). Lysine 240 is covalently cross-linked (Glycyl lysine isopeptide (Lys-Gly) (interchain with G-Cter in SUMO2)). Serine 269 bears the Phosphoserine mark. Low complexity predominate over residues 284–295; that stretch reads EPPLDPELPALD. The segment at 284-367 is disordered; sequence EPPLDPELPA…KRSVLSKSVP (84 aa). Positions 291–333 are essential to induce neural progenitor proliferation; it reads LPALDSDGDSDDGEDGGGDEKRKNKGTSDSSSGNVSEGDSPPD. Phosphoserine occurs at positions 296, 300, 326, and 330. Positions 296–307 are enriched in acidic residues; that stretch reads SDGDSDDGEDGG. A compositionally biased stretch (polar residues) spans 317 to 327; sequence TSDSSSGNVSE. Residues 344–358 show a composition bias toward basic and acidic residues; that stretch reads KSKDKMATPRKDGSK. The PHD-type 1; degenerate zinc-finger motif lies at 378-435; sequence LCGICLKGKESNKKGKAESLIHCSQCDNSGHPSCLDMTMELVSMIKTYPWQCMECKTC. Residue lysine 384 forms a Glycyl lysine isopeptide (Lys-Gly) (interchain with G-Cter in SUMO2) linkage. The PHD-type 2; degenerate zinc-finger motif lies at 437–480; it reads ICGQPHHEEEMMFCDVCDRGYHTFCVGLGAIPSGRWICDCCQRA.

Belongs to the SAYP family. In terms of assembly, component of neural progenitors-specific chromatin remodeling complex (npBAF complex) composed of at least, ARID1A/BAF250A or ARID1B/BAF250B, SMARCD1/BAF60A, SMARCD3/BAF60C, SMARCA2/BRM/BAF190B, SMARCA4/BRG1/BAF190A, SMARCB1/BAF47, SMARCC1/BAF155, SMARCE1/BAF57, SMARCC2/BAF170, PHF10/BAF45A, ACTL6A/BAF53A and actin. Interacts with ACTL6A/BAF53A, SMARCA2/BRM/BAF190B, SMARCA4/BRG1/BAF190A and PBRM1/BAF180.

The protein resides in the nucleus. Involved in transcription activity regulation by chromatin remodeling. Belongs to the neural progenitors-specific chromatin remodeling complex (npBAF complex) and is required for the proliferation of neural progenitors. During neural development a switch from a stem/progenitor to a post-mitotic chromatin remodeling mechanism occurs as neurons exit the cell cycle and become committed to their adult state. The transition from proliferating neural stem/progenitor cells to post-mitotic neurons requires a switch in subunit composition of the npBAF and nBAF complexes. As neural progenitors exit mitosis and differentiate into neurons, npBAF complexes which contain ACTL6A/BAF53A and PHF10/BAF45A, are exchanged for homologous alternative ACTL6B/BAF53B and DPF1/BAF45B or DPF3/BAF45C subunits in neuron-specific complexes (nBAF). The npBAF complex is essential for the self-renewal/proliferative capacity of the multipotent neural stem cells. The nBAF complex along with CREST plays a role regulating the activity of genes essential for dendrite growth. The chain is PHD finger protein 10 (Phf10) from Rattus norvegicus (Rat).